The primary structure comprises 339 residues: 4-amino-5-hydroxymethyl-2-methylpyrimidine phosphate synthase (339 aa).

Lys62 is subject to N6-(pyridoxal phosphate)lysine. The active site involves His66. A pyridoxal 5'-phosphate-binding site is contributed by 115–118; the sequence is GEFG. The CCCFC; essential for catalytic activity, may be the site of iron coordination motif lies at 195 to 199; it reads CCCFC.

This sequence belongs to the NMT1/THI5 family. As to quaternary structure, homodimer. Requires Fe(3+) as cofactor.

The catalysed reaction is N(6)-(pyridoxal phosphate)-L-lysyl-[4-amino-5-hydroxymethyl-2-methylpyrimidine phosphate synthase] + L-histidyl-[4-amino-5-hydroxymethyl-2-methylpyrimidine phosphate synthase] + 2 Fe(3+) + 4 H2O = L-lysyl-[4-amino-5-hydroxymethyl-2-methylpyrimidine phosphate synthase] + (2S)-2-amino-5-hydroxy-4-oxopentanoyl-[4-amino-5-hydroxymethyl-2-methylpyrimidine phosphate synthase] + 4-amino-2-methyl-5-(phosphooxymethyl)pyrimidine + 3-oxopropanoate + 2 Fe(2+) + 2 H(+). The protein operates within cofactor biosynthesis; thiamine diphosphate biosynthesis. Its function is as follows. Responsible for the formation of the pyrimidine heterocycle in the thiamine biosynthesis pathway. Catalyzes the formation of hydroxymethylpyrimidine phosphate (HMP-P) from histidine and pyridoxal phosphate (PLP). The protein uses PLP and the active site histidine to form HMP-P, generating an inactive enzyme. The enzyme can only undergo a single turnover, which suggests it is a suicide enzyme. In Candida albicans (strain WO-1) (Yeast), this protein is 4-amino-5-hydroxymethyl-2-methylpyrimidine phosphate synthase.